Here is a 157-residue protein sequence, read N- to C-terminus: S-ribosylhomocysteine lyase (157 aa).

3 residues coordinate Fe cation: His54, His58, and Cys124.

The protein belongs to the LuxS family. In terms of assembly, homodimer. Fe cation serves as cofactor.

The catalysed reaction is S-(5-deoxy-D-ribos-5-yl)-L-homocysteine = (S)-4,5-dihydroxypentane-2,3-dione + L-homocysteine. Its function is as follows. Involved in the synthesis of autoinducer 2 (AI-2) which is secreted by bacteria and is used to communicate both the cell density and the metabolic potential of the environment. The regulation of gene expression in response to changes in cell density is called quorum sensing. Catalyzes the transformation of S-ribosylhomocysteine (RHC) to homocysteine (HC) and 4,5-dihydroxy-2,3-pentadione (DPD). This chain is S-ribosylhomocysteine lyase, found in Levilactobacillus brevis (strain ATCC 367 / BCRC 12310 / CIP 105137 / JCM 1170 / LMG 11437 / NCIMB 947 / NCTC 947) (Lactobacillus brevis).